A 192-amino-acid polypeptide reads, in one-letter code: Rho-related protein racC (192 aa).

Residue Gly-13–Thr-20 participates in GTP binding. The Effector region signature appears at Tyr-35 to Tyr-43. GTP-binding positions include Asp-60–Gln-64 and Thr-118–Asp-121. Cys-189 bears the Cysteine methyl ester mark. Cys-189 is lipidated: S-geranylgeranyl cysteine. Positions Ile-190–Met-192 are cleaved as a propeptide — removed in mature form.

The protein belongs to the small GTPase superfamily. Rho family. Interacts with pakB.

It localises to the cell membrane. This chain is Rho-related protein racC (racC), found in Dictyostelium discoideum (Social amoeba).